A 573-amino-acid chain; its full sequence is 60 kDa heat shock protein, mitochondrial (573 aa).

The N-terminal 26 residues, 1–26 (MLRLPTVFRQMRPVSRVLAPHLTRAY), are a transit peptide targeting the mitochondrion. Lysine 31 bears the N6-succinyllysine mark. Serine 67 and serine 70 each carry phosphoserine. Position 75 (lysine 75) interacts with ATP. At lysine 75 the chain carries N6-acetyllysine. Residue lysine 82 is modified to N6-acetyllysine; alternate. Lysine 82 carries the post-translational modification N6-succinyllysine; alternate. The residue at position 87 (lysine 87) is an N6-acetyllysine. A Phosphotyrosine modification is found at tyrosine 90. Lysine 91 carries the post-translational modification N6-acetyllysine. Residue 111–115 (DGTTT) coordinates ATP. Lysine 125 carries the post-translational modification N6-acetyllysine; alternate. Lysine 125 bears the N6-succinyllysine; alternate mark. Lysine 130 is modified (N6-acetyllysine). Position 133 is an N6-acetyllysine; alternate (lysine 133). The residue at position 133 (lysine 133) is an N6-succinyllysine; alternate. N6-malonyllysine; alternate is present on lysine 133. An N6-acetyllysine modification is found at lysine 156. N6-acetyllysine; alternate occurs at positions 191, 202, 205, 218, and 236. Lysine 191, lysine 202, lysine 205, lysine 218, and lysine 236 each carry N6-succinyllysine; alternate. Residue lysine 249 is modified to N6-acetyllysine. Residue lysine 250 is modified to N6-acetyllysine; alternate. An N6-succinyllysine; alternate modification is found at lysine 250. An N6-acetyllysine mark is found at lysine 269 and lysine 292. Lysine 301 is modified (N6-succinyllysine). N6-acetyllysine is present on lysine 314. An N6-acetyllysine; alternate modification is found at lysine 352. An N6-succinyllysine; alternate modification is found at lysine 352. N6-acetyllysine occurs at positions 359 and 389. Lysine 396 is subject to N6-acetyllysine; alternate. Lysine 396 is modified (N6-succinyllysine; alternate). The residue at position 410 (serine 410) is a Phosphoserine. An ATP-binding site is contributed by glycine 440. Lysine 469 bears the N6-acetyllysine mark. Lysine 481 is modified (N6-acetyllysine; alternate). Lysine 481 is subject to N6-succinyllysine; alternate. The residue at position 488 (serine 488) is a Phosphoserine. Residue aspartate 520 participates in ATP binding. Lysine 551 participates in a covalent cross-link: Glycyl lysine isopeptide (Lys-Gly) (interchain with G-Cter in SUMO2).

Belongs to the chaperonin (HSP60) family. As to quaternary structure, homoheptamer arranged in a ring structure. The functional units of these chaperonins consist of heptameric rings of the large subunit Hsp60, which function as a back-to-back double ring. Interacts with 2 heptameric Hsp10 rings to form the symmetrical football complex. Interacts with HRAS. Interacts with ATAD3A. Interacts with ETFBKMT and EEF1AKMT3. Interacts with MFHAS1. In terms of assembly, (Microbial infection) Interacts with hepatitis B virus/HBV protein X. (Microbial infection) Interacts with HTLV-1 protein p40tax.

It localises to the mitochondrion matrix. It catalyses the reaction ATP + H2O + a folded polypeptide = ADP + phosphate + an unfolded polypeptide.. Chaperonin implicated in mitochondrial protein import and macromolecular assembly. Together with Hsp10, facilitates the correct folding of imported proteins. May also prevent misfolding and promote the refolding and proper assembly of unfolded polypeptides generated under stress conditions in the mitochondrial matrix. The functional units of these chaperonins consist of heptameric rings of the large subunit Hsp60, which function as a back-to-back double ring. In a cyclic reaction, Hsp60 ring complexes bind one unfolded substrate protein per ring, followed by the binding of ATP and association with 2 heptameric rings of the co-chaperonin Hsp10. This leads to sequestration of the substrate protein in the inner cavity of Hsp60 where, for a certain period of time, it can fold undisturbed by other cell components. Synchronous hydrolysis of ATP in all Hsp60 subunits results in the dissociation of the chaperonin rings and the release of ADP and the folded substrate protein. In Homo sapiens (Human), this protein is 60 kDa heat shock protein, mitochondrial (HSPD1).